The following is a 336-amino-acid chain: Holliday junction branch migration complex subunit RuvB (336 aa).

Residues 1 to 181 (MDRIVEIEKF…FGMQFRLEFY (181 aa)) are large ATPase domain (RuvB-L). ATP contacts are provided by residues Leu-20, Arg-21, Gly-62, Lys-65, Thr-66, Thr-67, 128–130 (EDF), Arg-171, Tyr-181, and Arg-218. Mg(2+) is bound at residue Thr-66. Positions 182–252 (KNEELAIILE…RAKEALDSLG (71 aa)) are small ATPAse domain (RuvB-S). The tract at residues 255-336 (ELGFDAMDLR…KYNKGLFDEK (82 aa)) is head domain (RuvB-H). DNA-binding residues include Arg-309 and Arg-314.

The protein belongs to the RuvB family. In terms of assembly, homohexamer. Forms an RuvA(8)-RuvB(12)-Holliday junction (HJ) complex. HJ DNA is sandwiched between 2 RuvA tetramers; dsDNA enters through RuvA and exits via RuvB. An RuvB hexamer assembles on each DNA strand where it exits the tetramer. Each RuvB hexamer is contacted by two RuvA subunits (via domain III) on 2 adjacent RuvB subunits; this complex drives branch migration. In the full resolvosome a probable DNA-RuvA(4)-RuvB(12)-RuvC(2) complex forms which resolves the HJ.

The protein resides in the cytoplasm. The enzyme catalyses ATP + H2O = ADP + phosphate + H(+). In terms of biological role, the RuvA-RuvB-RuvC complex processes Holliday junction (HJ) DNA during genetic recombination and DNA repair, while the RuvA-RuvB complex plays an important role in the rescue of blocked DNA replication forks via replication fork reversal (RFR). RuvA specifically binds to HJ cruciform DNA, conferring on it an open structure. The RuvB hexamer acts as an ATP-dependent pump, pulling dsDNA into and through the RuvAB complex. RuvB forms 2 homohexamers on either side of HJ DNA bound by 1 or 2 RuvA tetramers; 4 subunits per hexamer contact DNA at a time. Coordinated motions by a converter formed by DNA-disengaged RuvB subunits stimulates ATP hydrolysis and nucleotide exchange. Immobilization of the converter enables RuvB to convert the ATP-contained energy into a lever motion, pulling 2 nucleotides of DNA out of the RuvA tetramer per ATP hydrolyzed, thus driving DNA branch migration. The RuvB motors rotate together with the DNA substrate, which together with the progressing nucleotide cycle form the mechanistic basis for DNA recombination by continuous HJ branch migration. Branch migration allows RuvC to scan DNA until it finds its consensus sequence, where it cleaves and resolves cruciform DNA. The chain is Holliday junction branch migration complex subunit RuvB from Campylobacter lari (strain RM2100 / D67 / ATCC BAA-1060).